Reading from the N-terminus, the 381-residue chain is Homoserine O-succinyltransferase (381 aa).

In terms of domain architecture, AB hydrolase-1 spans 45-360 (NAVLVCHALN…PHGHDAFLLD (316 aa)). Residue S151 is the Nucleophile of the active site. A substrate-binding site is contributed by R221. Residues D321 and H354 contribute to the active site. D355 serves as a coordination point for substrate.

This sequence belongs to the AB hydrolase superfamily. MetX family. Homodimer.

Its subcellular location is the cytoplasm. It catalyses the reaction L-homoserine + succinyl-CoA = O-succinyl-L-homoserine + CoA. It functions in the pathway amino-acid biosynthesis; L-methionine biosynthesis via de novo pathway; O-succinyl-L-homoserine from L-homoserine: step 1/1. Transfers a succinyl group from succinyl-CoA to L-homoserine, forming succinyl-L-homoserine. The protein is Homoserine O-succinyltransferase of Paraburkholderia phymatum (strain DSM 17167 / CIP 108236 / LMG 21445 / STM815) (Burkholderia phymatum).